The following is a 415-amino-acid chain: Beta-1,4-glucuronyltransferase 1 (415 aa).

The Cytoplasmic portion of the chain corresponds to 1 to 8; the sequence is MQMSYAIR. A helical; Signal-anchor for type II membrane protein transmembrane segment spans residues 9 to 36; sequence CAFYQLLLAALMLVAMLQLLYLSLLSGL. Residues 37-415 lie on the Lumenal side of the membrane; it reads HGQEEQDQYF…AKYPNSPRRC (379 aa). The N-linked (GlcNAc...) asparagine glycan is linked to N204. Residues D227 and D229 each contribute to the Mn(2+) site. An N-linked (GlcNAc...) asparagine glycan is attached at N300.

Belongs to the glycosyltransferase 49 family. Interacts with LARGE1 and LARGE2. Mn(2+) serves as cofactor.

Its subcellular location is the golgi apparatus membrane. The catalysed reaction is 3-O-[beta-D-Xyl-(1-&gt;4)-Rib-ol-P-Rib-ol-P-3-beta-D-GalNAc-(1-&gt;3)-beta-D-GlcNAc-(1-&gt;4)-(O-6-P-alpha-D-Man)]-Thr-[protein] + UDP-alpha-D-glucuronate = 3-O-[beta-D-GlcA-(1-&gt;3)-beta-D-Xyl-(1-&gt;4)-Rib-ol-P-Rib-ol-P-3-beta-D-GalNAc-(1-&gt;3)-beta-D-GlcNAc-(1-&gt;4)-(O-6-P-alpha-D-Man)]-Thr-[protein] + UDP + H(+). It functions in the pathway protein modification; protein glycosylation. Beta-1,4-glucuronyltransferase involved in O-mannosylation of alpha-dystroglycan (DAG1). Transfers a glucuronic acid (GlcA) residue onto a xylose (Xyl) acceptor to produce the glucuronyl-beta-1,4-xylose-beta disaccharide primer, which is further elongated by LARGE1, during synthesis of phosphorylated O-mannosyl glycan. Phosphorylated O-mannosyl glycan is a carbohydrate structure present in alpha-dystroglycan (DAG1), which is required for binding laminin G-like domain-containing extracellular proteins with high affinity. Required for axon guidance; via its function in O-mannosylation of alpha-dystroglycan (DAG1). In Pongo abelii (Sumatran orangutan), this protein is Beta-1,4-glucuronyltransferase 1.